Reading from the N-terminus, the 125-residue chain is Protein ApaG (125 aa).

Positions 1 to 125 (MINSPRVCIQ…FRLAVPTLIH (125 aa)) constitute an ApaG domain.

This is Protein ApaG from Escherichia coli (strain SE11).